The following is a 344-amino-acid chain: Glycerol-3-phosphate dehydrogenase [NAD(P)+] (344 aa).

NADPH contacts are provided by Ser11, Trp12, His32, Arg33, and Lys105. Sn-glycerol 3-phosphate contacts are provided by Lys105, Gly135, and Ser137. Ala139 is a binding site for NADPH. Positions 190, 243, 253, 254, and 255 each coordinate sn-glycerol 3-phosphate. The Proton acceptor role is filled by Lys190. Residue Arg254 coordinates NADPH. The NADPH site is built by Val278 and Glu280.

It belongs to the NAD-dependent glycerol-3-phosphate dehydrogenase family.

The protein resides in the cytoplasm. The catalysed reaction is sn-glycerol 3-phosphate + NAD(+) = dihydroxyacetone phosphate + NADH + H(+). It catalyses the reaction sn-glycerol 3-phosphate + NADP(+) = dihydroxyacetone phosphate + NADPH + H(+). It participates in membrane lipid metabolism; glycerophospholipid metabolism. Catalyzes the reduction of the glycolytic intermediate dihydroxyacetone phosphate (DHAP) to sn-glycerol 3-phosphate (G3P), the key precursor for phospholipid synthesis. This chain is Glycerol-3-phosphate dehydrogenase [NAD(P)+], found in Oceanobacillus iheyensis (strain DSM 14371 / CIP 107618 / JCM 11309 / KCTC 3954 / HTE831).